A 195-amino-acid chain; its full sequence is Inhibitor of glycogen debranching 1 (195 aa).

A compositionally biased stretch (polar residues) spans 1–18; it reads MTDPHLNTPQVSTSPTFE. The interval 1 to 101 is disordered; sequence MTDPHLNTPQ…ERRSSGPMDF (101 aa). Position 64 is a phosphoserine (Ser-64). Thr-65 is modified (phosphothreonine). Positions 75-95 are enriched in basic and acidic residues; it reads EQARERESSIGEHAPGAERRS. Residues Ser-95 and Ser-96 each carry the phosphoserine modification. At Thr-132 the chain carries Phosphothreonine. Positions 146-175 are disordered; the sequence is NSYLDNNSNGNSARVPHGSPPQLGTRRKSS. Residues 148–157 show a composition bias toward polar residues; the sequence is YLDNNSNGNS. Ser-164 carries the post-translational modification Phosphoserine.

Interacts with GDB1.

Its subcellular location is the cytoplasm. In terms of biological role, acts as an inhibitor of GDB1, enhancing the ability of cells to store glucose as glycogen. This chain is Inhibitor of glycogen debranching 1 (IGD1), found in Saccharomyces cerevisiae (strain ATCC 204508 / S288c) (Baker's yeast).